The chain runs to 246 residues: Mitochondrial inner membrane protease ATP23 homolog (246 aa).

Residue His-125 coordinates a divalent metal cation. Glu-126 is a catalytic residue. His-129 serves as a coordination point for a divalent metal cation.

It belongs to the peptidase M76 family. As to quaternary structure, interacts with XRCC6.

In Homo sapiens (Human), this protein is Mitochondrial inner membrane protease ATP23 homolog.